The primary structure comprises 84 residues: Transcriptional regulator WhiB1 (84 aa).

A 4Fe-4S Wbl-type domain is found at 8–70; it reads VCRDEDPELF…GGMSEDERRA (63 aa). [4Fe-4S] cluster is bound by residues C9, C37, C40, and C46.

The protein belongs to the WhiB family. As to quaternary structure, homodimer. The cofactor is [4Fe-4S] cluster. The Fe-S cluster can be nitrosylated by nitric oxide (NO). Post-translationally, upon Fe-S cluster removal intramolecular disulfide bonds are formed.

The protein resides in the cytoplasm. Acts as a transcriptional regulator. Probably redox-responsive. The apo- but not holo-form probably binds DNA. In Mycobacterium tuberculosis (strain CDC 1551 / Oshkosh), this protein is Transcriptional regulator WhiB1 (whiB1).